Reading from the N-terminus, the 723-residue chain is Host cell factor 2 (723 aa).

4 Kelch repeats span residues 34 to 79 (LMII…GFVC), 83 to 130 (RILV…RLGH), 207 to 255 (KMYV…VIGN), and 257 to 305 (MYIF…DSQE). Fibronectin type-III domains are found at residues 357 to 436 (PPAP…ANCT), 516 to 606 (TPSN…TCIP), and 608 to 720 (FPGA…SKKA). Positions 398-472 (AASPDASAAP…VALHSPLAPN (75 aa)) are disordered. Over residues 419–433 (QGSNSILHNSVSDPA) the composition is skewed to polar residues.

Binds KMT2A/MLL1. Component of the MLL1/MLL complex, at least composed of KMT2A/MLL1, ASH2L, RBBP5, DPY30, WDR5, MEN1, HCFC1 and HCFC2. Interacts with TASOR.

Its subcellular location is the cytoplasm. It is found in the nucleus. This Rattus norvegicus (Rat) protein is Host cell factor 2 (Hcfc2).